The following is a 483-amino-acid chain: NAD-dependent protein deacetylase SRT1 (483 aa).

One can recognise a Deacetylase sirtuin-type domain in the interval 27 to 270 (PELLHKKIEE…MYMMNLRIPP (244 aa)). NAD(+) is bound by residues 53-57 (AGIST), 63-65 (DFR), and 114-117 (QNVD). H134 functions as the Proton acceptor in the catalytic mechanism. 4 residues coordinate Zn(2+): C142, C145, C167, and C172. Residues 209 to 211 (GTS) and 235 to 237 (NLQ) contribute to the NAD(+) site.

Belongs to the sirtuin family. Class IV subfamily. It depends on Zn(2+) as a cofactor.

The protein localises to the nucleus. The catalysed reaction is N(6)-acetyl-L-lysyl-[protein] + NAD(+) + H2O = 2''-O-acetyl-ADP-D-ribose + nicotinamide + L-lysyl-[protein]. Functionally, NAD-dependent protein deacetylase. Has deacetylase activity towards H3K9Ac. May have a function in the safeguard against genome instability and DNA damage to ensure plant cell growth. May negatively regulate metabolic signal transduction involving methanol and jasmonates during leaf senescence. Required for histone H3K9Ac deacetylation and repression of AP2-1/RSR1 and amylase genes during early seed development. Functions as an epigenetic regulator to repress the expression of glycolytic genes and glycolysis in seedlings. Reduces lysine acetylation of the glycolytic glyceraldehyde-3-phosphate dehydrogenase (GAPDH), which is found to also function as an activator of glycolytic gene expression. This Oryza sativa subsp. indica (Rice) protein is NAD-dependent protein deacetylase SRT1.